Here is a 592-residue protein sequence, read N- to C-terminus: Arginine--tRNA ligase (592 aa).

The 'HIGH' region motif lies at 123 to 133; it reads PNTNKPLHLGH.

The protein belongs to the class-I aminoacyl-tRNA synthetase family. Monomer.

It localises to the cytoplasm. The catalysed reaction is tRNA(Arg) + L-arginine + ATP = L-arginyl-tRNA(Arg) + AMP + diphosphate. The sequence is that of Arginine--tRNA ligase from Flavobacterium johnsoniae (strain ATCC 17061 / DSM 2064 / JCM 8514 / BCRC 14874 / CCUG 350202 / NBRC 14942 / NCIMB 11054 / UW101) (Cytophaga johnsonae).